We begin with the raw amino-acid sequence, 445 residues long: Tubulin beta-5 chain (445 aa).

Residues Gln-11, Glu-69, Ser-138, Gly-142, Thr-143, Gly-144, Asn-204, and Asn-226 each contribute to the GTP site. Position 69 (Glu-69) interacts with Mg(2+). Residues 420 to 445 are disordered; sequence AEYQQYQDATADDEYEEGEEEEEEAA. A compositionally biased stretch (acidic residues) spans 429–445; the sequence is TADDEYEEGEEEEEEAA.

This sequence belongs to the tubulin family. Dimer of alpha and beta chains. A typical microtubule is a hollow water-filled tube with an outer diameter of 25 nm and an inner diameter of 15 nM. Alpha-beta heterodimers associate head-to-tail to form protofilaments running lengthwise along the microtubule wall with the beta-tubulin subunit facing the microtubule plus end conferring a structural polarity. Microtubules usually have 13 protofilaments but different protofilament numbers can be found in some organisms and specialized cells. Requires Mg(2+) as cofactor.

It is found in the cytoplasm. Its subcellular location is the cytoskeleton. Its function is as follows. Tubulin is the major constituent of microtubules, a cylinder consisting of laterally associated linear protofilaments composed of alpha- and beta-tubulin heterodimers. Microtubules grow by the addition of GTP-tubulin dimers to the microtubule end, where a stabilizing cap forms. Below the cap, tubulin dimers are in GDP-bound state, owing to GTPase activity of alpha-tubulin. The chain is Tubulin beta-5 chain from Gossypium hirsutum (Upland cotton).